Here is a 415-residue protein sequence, read N- to C-terminus: Homoserine O-succinyltransferase (415 aa).

One can recognise an AB hydrolase-1 domain in the interval 69 to 383 (NAVLVCHALN…PHGHDAFLLD (315 aa)). The active-site Nucleophile is Ser175. Position 245 (Arg245) interacts with substrate. Residues Asp344 and His377 contribute to the active site. Residue Asp378 coordinates substrate.

Belongs to the AB hydrolase superfamily. MetX family. As to quaternary structure, homodimer.

Its subcellular location is the cytoplasm. It catalyses the reaction L-homoserine + succinyl-CoA = O-succinyl-L-homoserine + CoA. The protein operates within amino-acid biosynthesis; L-methionine biosynthesis via de novo pathway; O-succinyl-L-homoserine from L-homoserine: step 1/1. Transfers a succinyl group from succinyl-CoA to L-homoserine, forming succinyl-L-homoserine. The polypeptide is Homoserine O-succinyltransferase (Bordetella pertussis (strain Tohama I / ATCC BAA-589 / NCTC 13251)).